We begin with the raw amino-acid sequence, 314 residues long: Probable cell division protein WhiA (314 aa).

The segment at residues 274-305 (SLAELGDRLEISKSGANHRMRKLKALEDMINA) is a DNA-binding region (H-T-H motif).

It belongs to the WhiA family.

Involved in cell division and chromosome segregation. In Leuconostoc citreum (strain KM20), this protein is Probable cell division protein WhiA.